Consider the following 295-residue polypeptide: MSSIKVECVIKEKNEVGESPVWEEKDSSLLYVDITGQKVSRWSSLTKQIESMNTEKLVGCVVPRQAGGYVIAEGTRFAFVDWVKRSITAVAEVNEKPNTRFNDGKVDPAGRFFAGTMSMDMKPDVVDAALYNLQPDHSVVRHFDQVHLSNGLDWSLDHRVFYYIDSLAFMVEAFDYDIQTGGLSNRRTVYKMEKDEGIPDGMCIDTEGKLWVACFNGGRVLRIDPQTGKRLQTVKLPAERITSCCFGGKDYSDLYITSAYIGMDAEALAKQPEAGCTFKVTGLGVKGIPPYSYTG.

Glu-18 serves as a coordination point for a divalent metal cation. Arg-100, Asn-102, and Asp-120 together coordinate substrate. A divalent metal cation-binding residues include Asn-150 and Asp-200. Asp-200 (proton donor/acceptor) is an active-site residue.

This sequence belongs to the SMP-30/CGR1 family. It depends on Zn(2+) as a cofactor. The cofactor is Mn(2+). Ca(2+) serves as cofactor. Requires Mg(2+) as cofactor.

It is found in the cytoplasm. The catalysed reaction is D-glucono-1,5-lactone + H2O = D-gluconate + H(+). It participates in cofactor biosynthesis; L-ascorbate biosynthesis via UDP-alpha-D-glucuronate pathway; L-ascorbate from UDP-alpha-D-glucuronate: step 3/4. Gluconolactonase with low activity towards other sugar lactones, including gulonolactone and galactonolactone. Catalyzes a key step in ascorbic acid (vitamin C) biosynthesis. Can also hydrolyze diisopropyl phosphorofluoridate and phenylacetate (in vitro). Calcium-binding protein. Modulates Ca(2+) signaling, and Ca(2+)-dependent cellular processes and enzyme activities. In Danio rerio (Zebrafish), this protein is Regucalcin.